Consider the following 448-residue polypeptide: Signal recognition particle 54 kDa protein (448 aa).

GTP is bound by residues 107 to 114 (GIQGSGKT), 189 to 193 (DSAGR), and 247 to 250 (TKLD).

It belongs to the GTP-binding SRP family. SRP54 subfamily. Part of the signal recognition particle protein translocation system, which is composed of SRP and FtsY. Archaeal SRP consists of a 7S RNA molecule of 300 nucleotides and two protein subunits: SRP54 and SRP19.

The protein localises to the cytoplasm. The catalysed reaction is GTP + H2O = GDP + phosphate + H(+). Involved in targeting and insertion of nascent membrane proteins into the cytoplasmic membrane. Binds to the hydrophobic signal sequence of the ribosome-nascent chain (RNC) as it emerges from the ribosomes. The SRP-RNC complex is then targeted to the cytoplasmic membrane where it interacts with the SRP receptor FtsY. The protein is Signal recognition particle 54 kDa protein of Thermococcus kodakarensis (strain ATCC BAA-918 / JCM 12380 / KOD1) (Pyrococcus kodakaraensis (strain KOD1)).